The chain runs to 287 residues: Viomycin phosphotransferase (287 aa).

The active-site Proton acceptor is the D190.

It belongs to the aminoglycoside phosphotransferase family.

It catalyses the reaction viomycin + ATP = O-phosphoviomycin + ADP + H(+). The aminoglycoside phosphotransferases achieve inactivation of their antibiotic substrates by phosphorylation. The protein is Viomycin phosphotransferase (vph) of Streptomyces vinaceus.